A 214-amino-acid polypeptide reads, in one-letter code: Large ribosomal subunit protein uL3 (214 aa).

A disordered region spans residues 134 to 161 (THGNSLSHRAPGSIGQCQTPGRVMKGKK). At Gln151 the chain carries N5-methylglutamine.

Belongs to the universal ribosomal protein uL3 family. In terms of assembly, part of the 50S ribosomal subunit. Forms a cluster with proteins L14 and L19. Methylated by PrmB.

Functionally, one of the primary rRNA binding proteins, it binds directly near the 3'-end of the 23S rRNA, where it nucleates assembly of the 50S subunit. The chain is Large ribosomal subunit protein uL3 from Teredinibacter turnerae (strain ATCC 39867 / T7901).